We begin with the raw amino-acid sequence, 440 residues long: D-serine dehydratase (440 aa).

At K116 the chain carries N6-(pyridoxal phosphate)lysine.

This sequence belongs to the serine/threonine dehydratase family. DsdA subfamily. In terms of assembly, monomer. Pyridoxal 5'-phosphate serves as cofactor.

The enzyme catalyses D-serine = pyruvate + NH4(+). The polypeptide is D-serine dehydratase (Salmonella arizonae (strain ATCC BAA-731 / CDC346-86 / RSK2980)).